We begin with the raw amino-acid sequence, 401 residues long: Formate-dependent phosphoribosylglycinamide formyltransferase (401 aa).

Residues 22–23 and E82 each bind N(1)-(5-phospho-beta-D-ribosyl)glycinamide; that span reads EL. ATP is bound by residues R115, K157, 162-167, 197-200, and E205; these read SSGKGQ and EGFI. The 196-residue stretch at 120-315 folds into the ATP-grasp domain; that stretch reads RLAAESLGLP…EFELHARAIL (196 aa). Mg(2+)-binding residues include E274 and E286. N(1)-(5-phospho-beta-D-ribosyl)glycinamide contacts are provided by residues D293, K362, and 369 to 370; that span reads RR.

Belongs to the PurK/PurT family. In terms of assembly, homodimer.

The enzyme catalyses N(1)-(5-phospho-beta-D-ribosyl)glycinamide + formate + ATP = N(2)-formyl-N(1)-(5-phospho-beta-D-ribosyl)glycinamide + ADP + phosphate + H(+). It functions in the pathway purine metabolism; IMP biosynthesis via de novo pathway; N(2)-formyl-N(1)-(5-phospho-D-ribosyl)glycinamide from N(1)-(5-phospho-D-ribosyl)glycinamide (formate route): step 1/1. In terms of biological role, involved in the de novo purine biosynthesis. Catalyzes the transfer of formate to 5-phospho-ribosyl-glycinamide (GAR), producing 5-phospho-ribosyl-N-formylglycinamide (FGAR). Formate is provided by PurU via hydrolysis of 10-formyl-tetrahydrofolate. This is Formate-dependent phosphoribosylglycinamide formyltransferase from Cupriavidus necator (strain ATCC 17699 / DSM 428 / KCTC 22496 / NCIMB 10442 / H16 / Stanier 337) (Ralstonia eutropha).